Consider the following 528-residue polypeptide: Biotin carboxylase 1, chloroplastic (528 aa).

The transit peptide at 1–51 (MEATLPVCKSVTSTPGLFMGKTSGIRSSQCSFMMGNKVNFPRQRAQTAHVH) directs the protein to the chloroplast. Residues K179, K221, 227–228 (GG), 263–266 (EKYV), and H271 contribute to the ATP site. The 198-residue stretch at 183–380 (RETMKKAGVP…LIEEQIRVAM (198 aa)) folds into the ATP-grasp domain. Position 300 (K300) interacts with hydrogencarbonate. E338 and E351 together coordinate ATP. Residues E338, E351, and N353 each coordinate Mg(2+). Positions 338, 351, and 353 each coordinate Mn(2+). 3 residues coordinate hydrogencarbonate: R355, V358, and R401. Residue R355 is part of the active site. Residue R401 coordinates biotin.

As to quaternary structure, acetyl-CoA carboxylase is a heterohexamer composed of biotin carboxyl carrier protein, biotin carboxylase and two subunits each of ACCase subunit alpha and ACCase plastid-coded subunit beta (accD). The cofactor is Mg(2+). Mn(2+) serves as cofactor.

The protein resides in the plastid. It localises to the chloroplast. It carries out the reaction N(6)-biotinyl-L-lysyl-[protein] + hydrogencarbonate + ATP = N(6)-carboxybiotinyl-L-lysyl-[protein] + ADP + phosphate + H(+). Its pathway is lipid metabolism; malonyl-CoA biosynthesis; malonyl-CoA from acetyl-CoA: step 1/1. In terms of biological role, this protein is a component of the acetyl coenzyme A carboxylase complex; first, biotin carboxylase catalyzes the carboxylation of the carrier protein and then the transcarboxylase transfers the carboxyl group to form malonyl-CoA. This Populus trichocarpa (Western balsam poplar) protein is Biotin carboxylase 1, chloroplastic.